Here is a 228-residue protein sequence, read N- to C-terminus: Putative N-acetylmannosamine-6-phosphate 2-epimerase (228 aa).

It belongs to the NanE family.

It carries out the reaction an N-acyl-D-glucosamine 6-phosphate = an N-acyl-D-mannosamine 6-phosphate. It participates in amino-sugar metabolism; N-acetylneuraminate degradation; D-fructose 6-phosphate from N-acetylneuraminate: step 3/5. Functionally, converts N-acetylmannosamine-6-phosphate (ManNAc-6-P) to N-acetylglucosamine-6-phosphate (GlcNAc-6-P). This is Putative N-acetylmannosamine-6-phosphate 2-epimerase from Thermosynechococcus vestitus (strain NIES-2133 / IAM M-273 / BP-1).